The chain runs to 626 residues: MIPANASARKGPEGKYPLHYLVWHNRHRELEKEVRAGQVDIEQLDPRGRTPLHLATTLGHLECARVLLAHGADVGRENRSGWTVLQEAVSTRDLELVQLVLRYRDYQRVVKRLAGIPVLLEKLRKAQDFYVEMKWEFTSWVPLVSKICPSDTYKVWKSGQNLRVDTTLLGFDHMTWQRGNRSFVFRGQDTSAVVMEIDHDRRVVYTETLALAGQDRELLLAAAQPTEEQVLSRLTAPVVTTQLDTKNISFERNKTGILGWRSEKTEMVNGYEAKVYGASNVELITRTRTEHLSEQHKGKVKGCKTPLQSFLGIAEQHGGPQNGTLITQTLSQANPTAITAEEYFNPNFELGNRDMGRPMELTTKTQKFKAKLWLCEEHPLSLCEQVAPIIDLMAVSNALFAKLRDFITLRLPPGFPVKIEIPIFHILNARITFGNLNGCDEPVPSVRGSPSSETPSPGSDSSSVSSSSSTTSCRGCEISPALFEAPRGYSMMGGQREAATRDDDDDLLQFAIQQSLLEAGSEYDQVTIWEALTNSKPGTHPMSYEGRRQDRSAPPTPQRQPAPPASVPSPRPSSGPGSGGHVFRSYDEQLRLAMELSAQEQEERRRRARQEEEELERILRLSLTEQ.

Residue Met1 is modified to N-acetylmethionine. 2 ANK repeats span residues 47–76 (RGRT…DVGR) and 80–109 (SGWT…YQRV). Residues 442–474 (PVPSVRGSPSSETPSPGSDSSSVSSSSSTTSCR) form a disordered region. The segment covering 449–472 (SPSSETPSPGSDSSSVSSSSSTTS) has biased composition (low complexity). The UIM 1 domain maps to 503-522 (DDDDLLQFAIQQSLLEAGSE). Disordered regions lie at residues 534 to 590 (NSKP…DEQL) and 595 to 614 (ELSA…EEEE). The span at 554–573 (PPTPQRQPAPPASVPSPRPS) shows a compositional bias: pro residues. 2 consecutive UIM domains span residues 585-604 (SYDE…QEER) and 610-626 (QEEE…LTEQ).

In terms of assembly, interacts with EGFR (ubiquitinated); the interaction is direct and may regulate EGFR internalization.

The protein localises to the cell membrane. It localises to the late endosome. Its subcellular location is the early endosome. Its function is as follows. Ubiquitin-binding protein that specifically recognizes and binds 'Lys-63'-linked ubiquitin. Does not bind 'Lys-48'-linked ubiquitin. Positively regulates the internalization of ligand-activated EGFR by binding to the Ub moiety of ubiquitinated EGFR at the cell membrane. The sequence is that of Ankyrin repeat domain-containing protein 13B (ANKRD13B) from Homo sapiens (Human).